The primary structure comprises 155 residues: uncharacterized protein (155 aa).

The protein belongs to the mimivirus L6/L7/L57 family.

This is an uncharacterized protein from Acanthamoeba polyphaga (Amoeba).